A 462-amino-acid polypeptide reads, in one-letter code: 3-isopropylmalate dehydratase large subunit (462 aa).

[4Fe-4S] cluster is bound by residues cysteine 337, cysteine 397, and cysteine 400.

This sequence belongs to the aconitase/IPM isomerase family. LeuC type 1 subfamily. As to quaternary structure, heterodimer of LeuC and LeuD. It depends on [4Fe-4S] cluster as a cofactor.

The catalysed reaction is (2R,3S)-3-isopropylmalate = (2S)-2-isopropylmalate. It functions in the pathway amino-acid biosynthesis; L-leucine biosynthesis; L-leucine from 3-methyl-2-oxobutanoate: step 2/4. In terms of biological role, catalyzes the isomerization between 2-isopropylmalate and 3-isopropylmalate, via the formation of 2-isopropylmaleate. In Listeria monocytogenes serotype 4b (strain CLIP80459), this protein is 3-isopropylmalate dehydratase large subunit.